An 805-amino-acid chain; its full sequence is Leucine--tRNA ligase (805 aa).

Positions 41 to 52 (PYPSGAGLHVGH) match the 'HIGH' region motif. A 'KMSKS' region motif is present at residues 577 to 581 (KMSKS). Residue lysine 580 coordinates ATP.

It belongs to the class-I aminoacyl-tRNA synthetase family.

It is found in the cytoplasm. The catalysed reaction is tRNA(Leu) + L-leucine + ATP = L-leucyl-tRNA(Leu) + AMP + diphosphate. The polypeptide is Leucine--tRNA ligase (Staphylococcus aureus (strain JH1)).